The chain runs to 131 residues: Biogenesis of lysosome-related organelles complex 1 subunit CNL1 (131 aa).

Residues 1–29 (MSAPDSNSGHAHDSAQNEGAAEGTRDPFG) are disordered. Residues 73–101 (DAIDINIEEMRRILQKCEELETHFDMLDQ) adopt a coiled-coil conformation.

Belongs to the BLOC1S4 family. In terms of assembly, component of the biogenesis of lysosome-related organelles complex-1 (BLOC-1).

It is found in the cytoplasm. Functionally, component of the biogenesis of lysosome-related organelles complex-1 (BLOC-1), a complex that is involved in endosomal cargo sorting. In Lachancea thermotolerans (strain ATCC 56472 / CBS 6340 / NRRL Y-8284) (Yeast), this protein is Biogenesis of lysosome-related organelles complex 1 subunit CNL1 (CLN1).